Reading from the N-terminus, the 423-residue chain is D-tagatose-1,6-bisphosphate aldolase subunit GatZ (423 aa).

The protein belongs to the GatZ/KbaZ family. GatZ subfamily. As to quaternary structure, forms a complex with GatY.

The protein operates within carbohydrate metabolism; D-tagatose 6-phosphate degradation; D-glyceraldehyde 3-phosphate and glycerone phosphate from D-tagatose 6-phosphate: step 2/2. Its function is as follows. Component of the tagatose-1,6-bisphosphate aldolase GatYZ that is required for full activity and stability of the Y subunit. Could have a chaperone-like function for the proper and stable folding of GatY. When expressed alone, GatZ does not show any aldolase activity. Is involved in the catabolism of galactitol. This is D-tagatose-1,6-bisphosphate aldolase subunit GatZ from Salmonella typhimurium (strain LT2 / SGSC1412 / ATCC 700720).